We begin with the raw amino-acid sequence, 84 residues long: Neurotoxin BmK-M10 (84 aa).

Residues M1–S19 form the signal peptide. The LCN-type CS-alpha/beta domain maps to R21–Q83. 4 disulfides stabilise this stretch: C31/C82, C35/C55, C41/C65, and C45/C67. Position 84 (R84) is a propeptide, removed by a carboxypeptidase.

In terms of tissue distribution, expressed by the venom gland.

The protein localises to the secreted. Functionally, binds to voltage-dependent sodium channels (Nav) and voltage-dependent delayed rectifier potassium channels and inhibits the inactivation of the activated channels, thereby blocking neuronal transmission. Administration to mice at a dosage of 0.8 mg/kg produces an analgesic effect. This Olivierus martensii (Manchurian scorpion) protein is Neurotoxin BmK-M10.